We begin with the raw amino-acid sequence, 175 residues long: Peptide deformylase (175 aa).

Residues Cys-98 and His-140 each contribute to the Fe cation site. The active site involves Glu-141. His-144 is a binding site for Fe cation.

The protein belongs to the polypeptide deformylase family. Requires Fe(2+) as cofactor.

It carries out the reaction N-terminal N-formyl-L-methionyl-[peptide] + H2O = N-terminal L-methionyl-[peptide] + formate. In terms of biological role, removes the formyl group from the N-terminal Met of newly synthesized proteins. Requires at least a dipeptide for an efficient rate of reaction. N-terminal L-methionine is a prerequisite for activity but the enzyme has broad specificity at other positions. The sequence is that of Peptide deformylase from Bradyrhizobium sp. (strain BTAi1 / ATCC BAA-1182).